Here is a 697-residue protein sequence, read N- to C-terminus: Glycine--tRNA ligase beta subunit (697 aa).

The protein belongs to the class-II aminoacyl-tRNA synthetase family. As to quaternary structure, tetramer of two alpha and two beta subunits.

It is found in the cytoplasm. It catalyses the reaction tRNA(Gly) + glycine + ATP = glycyl-tRNA(Gly) + AMP + diphosphate. The polypeptide is Glycine--tRNA ligase beta subunit (Cereibacter sphaeroides (strain ATCC 17023 / DSM 158 / JCM 6121 / CCUG 31486 / LMG 2827 / NBRC 12203 / NCIMB 8253 / ATH 2.4.1.) (Rhodobacter sphaeroides)).